Reading from the N-terminus, the 308-residue chain is Ribosomal RNA small subunit methyltransferase H (308 aa).

S-adenosyl-L-methionine-binding positions include 33 to 35, aspartate 51, phenylalanine 82, aspartate 96, and glutamine 103; that span reads GGY.

Belongs to the methyltransferase superfamily. RsmH family.

The protein resides in the cytoplasm. It catalyses the reaction cytidine(1402) in 16S rRNA + S-adenosyl-L-methionine = N(4)-methylcytidine(1402) in 16S rRNA + S-adenosyl-L-homocysteine + H(+). Functionally, specifically methylates the N4 position of cytidine in position 1402 (C1402) of 16S rRNA. The chain is Ribosomal RNA small subunit methyltransferase H from Rickettsia canadensis (strain McKiel).